A 449-amino-acid polypeptide reads, in one-letter code: Glucose-6-phosphate isomerase (449 aa).

Catalysis depends on glutamate 291, which acts as the Proton donor. Active-site residues include histidine 312 and lysine 426.

This sequence belongs to the GPI family.

Its subcellular location is the cytoplasm. It catalyses the reaction alpha-D-glucose 6-phosphate = beta-D-fructose 6-phosphate. Its pathway is carbohydrate biosynthesis; gluconeogenesis. It participates in carbohydrate degradation; glycolysis; D-glyceraldehyde 3-phosphate and glycerone phosphate from D-glucose: step 2/4. Functionally, catalyzes the reversible isomerization of glucose-6-phosphate to fructose-6-phosphate. The sequence is that of Glucose-6-phosphate isomerase from Streptococcus pyogenes serotype M3 (strain ATCC BAA-595 / MGAS315).